Consider the following 420-residue polypeptide: Protein disulfide isomerase Creld1 (420 aa).

An N-terminal signal peptide occupies residues 1–29 (MAPQPLRGLVPFLLWCLSLFLSLPGPVWL). Residues 30–362 (QPSPPPHSAP…GFFAEMTEDE (333 aa)) lie on the Extracellular side of the membrane. A CXXC motif is present at residues 46 to 49 (CHTC). Disulfide bonds link Cys46–Cys49, Cys155–Cys169, Cys163–Cys181, and Cys183–Cys192. The region spanning 153–193 (LPCPGGTERPCGGYGQCEGEGTRGGSGHCDCQAGYGGEACG) is the EGF-like 1 domain. Asn205 carries an N-linked (GlcNAc...) asparagine glycan. FU repeat units follow at residues 208 to 255 (HLVC…EQAT) and 268 to 315 (SYEC…VVCP). A CXXC motif is present at residues 278–281 (CLGC). Disulfide bonds link Cys278/Cys281, Cys309/Cys321, Cys314/Cys330, and Cys332/Cys343. The region spanning 305–342 (DVDECETVVCPGENEQCENTEGSYRCVCAEGFRQEDGI) is the EGF-like 2; calcium-binding domain. Residues 363-383 (MVVLQQMFFGVIICALATLAA) form a helical membrane-spanning segment. Position 384 (Lys384) is a topological domain, cytoplasmic. The helical transmembrane segment at 385–405 (GDLVFTAIFIGAVAAMTGYWL) threads the bilayer. The Extracellular portion of the chain corresponds to 406–420 (SERSDRVLEGFIKGR).

The protein belongs to the CRELD family.

It localises to the membrane. It carries out the reaction Catalyzes the rearrangement of -S-S- bonds in proteins.. Its function is as follows. Protein disulfide isomerase. Promotes the localization of acetylcholine receptors (AChRs) to the plasma membrane. The sequence is that of Protein disulfide isomerase Creld1 (Creld1) from Rattus norvegicus (Rat).